Consider the following 403-residue polypeptide: Synaptotagmin-7 (403 aa).

Over methionine 1 to aspartate 16 the chain is Vesicular. Residues valine 17–leucine 37 form a helical membrane-spanning segment. Residues cysteine 38–alanine 403 lie on the Cytoplasmic side of the membrane. Serine 52 bears the Phosphoserine mark. The interval leucine 53–aspartate 106 is disordered. Threonine 58 is modified (phosphothreonine). Serine 61 bears the Phosphoserine mark. Positions proline 90–proline 100 are enriched in basic and acidic residues. A phosphoserine mark is found at serine 119 and serine 122. C2 domains lie at asparagine 135–lysine 255 and serine 266–histidine 399. Positions 166, 172, 225, 227, 230, 233, 297, 303, 357, 359, 362, and 365 each coordinate Ca(2+).

This sequence belongs to the synaptotagmin family. Homodimer. Can also form heterodimers with SYT6, SYT9 and SYT10. Interacts with calmodulin (CALM1, CALM2 or CALM3). Interacts with CD63; required for localization to lysosomes. Interacts with APP. Ca(2+) is required as a cofactor. Post-translationally, palmitoylated at its vesicular N-terminus; palmitoylation is required for localization to lysosome and phagocytosis in macrophages. Expressed in a variety of adult and fetal tissues.

The protein resides in the cell membrane. It localises to the presynaptic cell membrane. Its subcellular location is the cytoplasmic vesicle. It is found in the secretory vesicle. The protein localises to the synaptic vesicle membrane. The protein resides in the lysosome membrane. It localises to the phagosome membrane. Its subcellular location is the peroxisome membrane. It is found in the secretory vesicle membrane. Functionally, ca(2+) sensor involved in Ca(2+)-dependent exocytosis of secretory and synaptic vesicles through Ca(2+) and phospholipid binding to the C2 domain. Ca(2+) induces binding of the C2-domains to phospholipid membranes and to assembled SNARE-complexes; both actions contribute to triggering exocytosis. SYT7 binds Ca(2+) with high affinity and slow kinetics compared to other synaptotagmins. Involved in Ca(2+)-triggered lysosomal exocytosis, a major component of the plasma membrane repair. Ca(2+)-regulated delivery of lysosomal membranes to the cell surface is also involved in the phagocytic uptake of particles by macrophages. Ca(2+)-triggered lysosomal exocytosis also plays a role in bone remodeling by regulating secretory pathways in osteoclasts and osteoblasts. In case of infection, involved in participates cell invasion by Trypanosoma cruzi via Ca(2+)-triggered lysosomal exocytosis. Involved in cholesterol transport from lysosome to peroxisome by promoting membrane contacts between lysosomes and peroxisomes: probably acts by promoting vesicle fusion by binding phosphatidylinositol-4,5-bisphosphate on peroxisomal membranes. Acts as a key mediator of synaptic facilitation, a process also named short-term synaptic potentiation: synaptic facilitation takes place at synapses with a low initial release probability and is caused by influx of Ca(2+) into the axon terminal after spike generation, increasing the release probability of neurotransmitters. Probably mediates synaptic facilitation by directly increasing the probability of release. May also contribute to synaptic facilitation by regulating synaptic vesicle replenishment, a process required to ensure that synaptic vesicles are ready for the arrival of the next action potential: SYT7 is required for synaptic vesicle replenishment by acting as a sensor for Ca(2+) and by forming a complex with calmodulin. Also acts as a regulator of Ca(2+)-dependent insulin and glucagon secretion in beta-cells. Triggers exocytosis by promoting fusion pore opening and fusion pore expansion in chromaffin cells. Also regulates the secretion of some non-synaptic secretory granules of specialized cells. The sequence is that of Synaptotagmin-7 from Homo sapiens (Human).